The chain runs to 337 residues: NADH-quinone oxidoreductase subunit H (337 aa).

The next 8 membrane-spanning stretches (helical) occupy residues 9 to 29, 77 to 97, 110 to 130, 154 to 174, 181 to 201, 229 to 249, 274 to 294, and 313 to 333; these read FAKI…FTYV, FLIA…VIPF, LLYI…AGWA, MGFA…SGIV, FWEW…ISGV, MAFA…SFLA, VPGI…YLWF, and VLIP…YGGV.

The protein belongs to the complex I subunit 1 family. In terms of assembly, NDH-1 is composed of 14 different subunits. Subunits NuoA, H, J, K, L, M, N constitute the membrane sector of the complex.

It localises to the cell inner membrane. The enzyme catalyses a quinone + NADH + 5 H(+)(in) = a quinol + NAD(+) + 4 H(+)(out). In terms of biological role, NDH-1 shuttles electrons from NADH, via FMN and iron-sulfur (Fe-S) centers, to quinones in the respiratory chain. The immediate electron acceptor for the enzyme in this species is believed to be ubiquinone. Couples the redox reaction to proton translocation (for every two electrons transferred, four hydrogen ions are translocated across the cytoplasmic membrane), and thus conserves the redox energy in a proton gradient. This subunit may bind ubiquinone. The chain is NADH-quinone oxidoreductase subunit H from Halorhodospira halophila (strain DSM 244 / SL1) (Ectothiorhodospira halophila (strain DSM 244 / SL1)).